The sequence spans 336 residues: Fructose-1,6-bisphosphatase class 1 (336 aa).

Residues E92, D115, L117, and D118 each contribute to the Mg(2+) site. Substrate is bound by residues 118–121 (DGSS), N211, Y244, 262–264 (YLY), and K274. E280 serves as a coordination point for Mg(2+).

It belongs to the FBPase class 1 family. Homotetramer. The cofactor is Mg(2+).

Its subcellular location is the cytoplasm. The catalysed reaction is beta-D-fructose 1,6-bisphosphate + H2O = beta-D-fructose 6-phosphate + phosphate. It participates in carbohydrate biosynthesis; gluconeogenesis. This is Fructose-1,6-bisphosphatase class 1 from Vibrio cholerae serotype O1 (strain ATCC 39315 / El Tor Inaba N16961).